Consider the following 358-residue polypeptide: Peptide chain release factor 1 (358 aa).

Gln-233 carries the N5-methylglutamine modification.

Belongs to the prokaryotic/mitochondrial release factor family. Post-translationally, methylated by PrmC. Methylation increases the termination efficiency of RF1.

The protein localises to the cytoplasm. In terms of biological role, peptide chain release factor 1 directs the termination of translation in response to the peptide chain termination codons UAG and UAA. The protein is Peptide chain release factor 1 of Macrococcus caseolyticus (strain JCSC5402) (Macrococcoides caseolyticum).